The chain runs to 287 residues: MFENENPNGSWLDEYQNDVRYGLKGKKIIEEISNFQKITIFESNRYGKALLLDNCWMTAEYQEKQYHECIVHPALCGSKEINKVLIIGGGDGGSARECLKYQELKNLDLIEIDKRVVELSQQYLSVIGGNCWKDQRLNLKLTNGINWVKDAKDNSYDVIIIDGSDPKGPAKGLFNKDFFKDCHRILKPDGVLGAQTESPESFEDIHINTVKMIKEVFKYADPLYGYVPIYPSGIWSWTFASIKKPRHLYPIISRANTISKTCQVWSPRWQRGGFDAIPANIERKLQQ.

Positions G9 to I242 constitute a PABS domain. Position 36 (Q36) interacts with S-methyl-5'-thioadenosine. The spermidine site is built by H67 and D91. Residues E111 and N143–G144 contribute to the S-methyl-5'-thioadenosine site. D162 functions as the Proton acceptor in the catalytic mechanism. P169 provides a ligand contact to S-methyl-5'-thioadenosine.

The protein belongs to the spermidine/spermine synthase family. Homodimer or homotetramer.

The protein localises to the cytoplasm. The catalysed reaction is S-adenosyl 3-(methylsulfanyl)propylamine + putrescine = S-methyl-5'-thioadenosine + spermidine + H(+). It participates in amine and polyamine biosynthesis; spermidine biosynthesis; spermidine from putrescine: step 1/1. Its function is as follows. Catalyzes the irreversible transfer of a propylamine group from the amino donor S-adenosylmethioninamine (decarboxy-AdoMet) to putrescine (1,4-diaminobutane) to yield spermidine. The polypeptide is Polyamine aminopropyltransferase (Prochlorococcus marinus (strain SARG / CCMP1375 / SS120)).